Reading from the N-terminus, the 504-residue chain is UNC93-like protein C922.05c (504 aa).

A run of 11 helical transmembrane segments spans residues isoleucine 64–glycine 84, alanine 97–cysteine 116, leucine 123–valine 145, glycine 149–glutamine 169, isoleucine 186–alanine 206, glycine 219–valine 239, tyrosine 275–tyrosine 293, leucine 310–leucine 330, valine 343–glutamine 363, phenylalanine 391–isoleucine 411, and tyrosine 452–tryptophan 472.

This sequence belongs to the unc-93 family.

The protein localises to the cytoplasm. Its subcellular location is the membrane. This is UNC93-like protein C922.05c from Schizosaccharomyces pombe (strain 972 / ATCC 24843) (Fission yeast).